The chain runs to 603 residues: Mitochondrial distribution and morphology protein 34 (603 aa).

Residues 1–205 enclose the SMP-LTD domain; the sequence is MAFNFNWSPL…SPEYQEIETE (205 aa). Low complexity predominate over residues 320–332; sequence KSGASSVASGSTG. Disordered regions lie at residues 320 to 511 and 558 to 603; these read KSGA…PLLR and IARK…AYVA. Positions 333–351 are enriched in polar residues; sequence NETLSSRPTLASSYSTSAG. Residues 371–380 show a composition bias toward basic and acidic residues; the sequence is VVDLRRKDGA. Positions 383 to 403 are enriched in polar residues; the sequence is GVSTEANTPLPSTQVSDTSSV. Residues 452-463 are compositionally biased toward low complexity; the sequence is PLLAPAPLIPNA. Positions 500–509 are enriched in polar residues; that stretch reads RQAQQSTSPL. The segment covering 558 to 570 has biased composition (basic and acidic residues); it reads IARKVQEEKDKSS.

Belongs to the MDM34 family. Component of the ER-mitochondria encounter structure (ERMES) or MDM complex, composed of mmm1, mdm10, mdm12 and mdm34.

The protein resides in the mitochondrion outer membrane. Functionally, component of the ERMES/MDM complex, which serves as a molecular tether to connect the endoplasmic reticulum (ER) and mitochondria. Components of this complex are involved in the control of mitochondrial shape and protein biogenesis, and function in nonvesicular lipid trafficking between the ER and mitochondria. Mdm34 is required for the interaction of the ER-resident membrane protein mmm1 and the outer mitochondrial membrane-resident beta-barrel protein mdm10. In Pyrenophora tritici-repentis (strain Pt-1C-BFP) (Wheat tan spot fungus), this protein is Mitochondrial distribution and morphology protein 34.